The following is a 259-amino-acid chain: MRVLVSNDDGVDAPGIQILAEALRRAGHEVMVVAPDRDRSGASNSLTLDVPIRTRRIDAQTCAVAGTPTDCVHLALTGMLDYDPDIVVSGINNSANLGDDVIYSGTVSAAMEGRFLGLPAVAVSLVTQNHEAHHFETAARAAVEIVARLKADPLPADTILNVNVPDLAWADVLGFEVTRLGNRHRSEPCVPQNDPRGRTVYWIGPAGPEQDAGAGTDFHAVRTGHISITPIHVDLTRYQALDTVAGWVGGLTAALDAPA.

A divalent metal cation is bound by residues aspartate 8, aspartate 9, serine 40, and asparagine 92.

The protein belongs to the SurE nucleotidase family. A divalent metal cation is required as a cofactor.

Its subcellular location is the cytoplasm. It carries out the reaction a ribonucleoside 5'-phosphate + H2O = a ribonucleoside + phosphate. Functionally, nucleotidase that shows phosphatase activity on nucleoside 5'-monophosphates. The sequence is that of 5'-nucleotidase SurE from Xanthomonas campestris pv. campestris (strain 8004).